The primary structure comprises 428 residues: Adenylosuccinate synthetase (428 aa).

GTP contacts are provided by residues 12 to 18 (GDEGKGK) and 40 to 42 (GHT). The active-site Proton acceptor is D13. Residues D13 and G40 each contribute to the Mg(2+) site. IMP-binding positions include 13-16 (DEGK), 38-41 (NAGH), T129, R143, Q224, T239, and R303. H41 serves as the catalytic Proton donor. Position 299 to 305 (299 to 305 (VTTGRIR)) interacts with substrate. GTP contacts are provided by residues R305, 331–333 (KVD), and 410–412 (AYG).

The protein belongs to the adenylosuccinate synthetase family. As to quaternary structure, homodimer. Mg(2+) is required as a cofactor.

The protein resides in the cytoplasm. It carries out the reaction IMP + L-aspartate + GTP = N(6)-(1,2-dicarboxyethyl)-AMP + GDP + phosphate + 2 H(+). It participates in purine metabolism; AMP biosynthesis via de novo pathway; AMP from IMP: step 1/2. In terms of biological role, plays an important role in the de novo pathway of purine nucleotide biosynthesis. Catalyzes the first committed step in the biosynthesis of AMP from IMP. The sequence is that of Adenylosuccinate synthetase from Francisella tularensis subsp. holarctica (strain FTNF002-00 / FTA).